The sequence spans 944 residues: Valine--tRNA ligase (944 aa).

Positions 43–53 (PNVTGTLHMGH) match the 'HIGH' region motif. The 'KMSKS' region motif lies at 550–554 (KMSKS). An ATP-binding site is contributed by Lys553. A coiled-coil region spans residues 878–942 (LVDMDAERTR…QLTGLREQRA (65 aa)).

The protein belongs to the class-I aminoacyl-tRNA synthetase family. ValS type 1 subfamily. Monomer.

It localises to the cytoplasm. The enzyme catalyses tRNA(Val) + L-valine + ATP = L-valyl-tRNA(Val) + AMP + diphosphate. In terms of biological role, catalyzes the attachment of valine to tRNA(Val). As ValRS can inadvertently accommodate and process structurally similar amino acids such as threonine, to avoid such errors, it has a 'posttransfer' editing activity that hydrolyzes mischarged Thr-tRNA(Val) in a tRNA-dependent manner. The sequence is that of Valine--tRNA ligase from Xanthomonas axonopodis pv. citri (strain 306).